Here is a 1718-residue protein sequence, read N- to C-terminus: PR domain zinc finger protein 2 (1718 aa).

The region spanning 28 to 141 is the SET domain; that stretch reads EEVRLFPSAV…PGEELLVWYN (114 aa). The disordered stretch occupies residues 155–335; sequence ERASARSKRS…TSEETLEDCS (181 aa). A compositionally biased stretch (basic residues) spans 159 to 173; the sequence is ARSKRSSPKSRKGKK. The span at 189–202 shows a compositional bias: polar residues; that stretch reads QLKTSEPDFTSANM. Basic and acidic residues predominate over residues 204 to 216; it reads DSAEGPKEDEEKP. A compositionally biased stretch (acidic residues) spans 265 to 297; the sequence is DLGEEEEEEEEEDEEEEEDDDDDELEDEGEEEA. The retinoblastoma protein binding stretch occupies residues 294 to 316; sequence EEEASMPNENSVKEPEIRCDEKP. A compositionally biased stretch (basic and acidic residues) spans 304–327; it reads SVKEPEIRCDEKPEDLLEEPKTTS. Residue Lys347 forms a Glycyl lysine isopeptide (Lys-Gly) (interchain with G-Cter in SUMO2) linkage. 2 C2H2-type zinc fingers span residues 360 to 382 and 390 to 412; these read FPCQ…MHIH and FKCK…ERRH. A disordered region spans residues 405–457; it reads RRRHERRHEAGLKRKPSQTLQPSEDLADGKASGENVASKDDSSPPSLGPDCLI. Residue Ser421 is modified to Phosphoserine. The C2H2-type 3 zinc-finger motif lies at 483 to 506; sequence HPCKYCKKVFGTHTNMRRHQRRVH. 2 disordered regions span residues 513 to 550 and 622 to 660; these read KGVR…EGEA and EDLP…DPMV. Residue Ser643 is modified to Phosphoserine. Residues Lys651, Lys690, and Lys692 each participate in a glycyl lysine isopeptide (Lys-Gly) (interchain with G-Cter in SUMO2) cross-link. Positions 729 to 797 are disordered; the sequence is TSSRFKRRTS…GRDERETVSP (69 aa). Residues 738–748 are compositionally biased toward low complexity; the sequence is SSPPSSPQHSP. Ser743 is subject to Phosphoserine. A Glycyl lysine isopeptide (Lys-Gly) (interchain with G-Cter in SUMO2) cross-link involves residue Lys774. Ser781, Ser785, and Ser796 each carry phosphoserine. Residues Lys866 and Lys879 each participate in a glycyl lysine isopeptide (Lys-Gly) (interchain with G-Cter in SUMO2) cross-link. The tract at residues 903 to 1083 is disordered; sequence VENPADGTRS…SPPPLSAISS (181 aa). The span at 951–969 shows a compositional bias: low complexity; it reads LQTPSLSSGQLPPLLIPTD. 2 short sequence motifs (SH3-binding) span residues 970–979 and 985–998; these read PSSPPPCPPV and PPPP…LPAP. The span at 970-997 shows a compositional bias: pro residues; that stretch reads PSSPPPCPPVLTVATPPPPLLPTVPLPA. Low complexity predominate over residues 1018–1027; that stretch reads SPLPILSPTV. The segment covering 1028 to 1038 has biased composition (pro residues); sequence SPSPSPIPPVE. The short motif at 1028–1052 is the SH3-binding element; that stretch reads SPSPSPIPPVEPLMSAASPGPPTLS. The span at 1042 to 1072 shows a compositional bias: low complexity; it reads SAASPGPPTLSSSSSSSSSSSSFSSSSSSSS. 3 consecutive C2H2-type zinc fingers follow at residues 1134-1156, 1162-1185, and 1191-1214; these read FVCN…LSIH, FKCE…FLLH, and FVCS…RDLH. Glycyl lysine isopeptide (Lys-Gly) (interchain with G-Cter in SUMO2) cross-links involve residues Lys1147 and Lys1151. Positions 1244 to 1265 are disordered; that stretch reads HMQSLPEDPLETSKEEEELNDS. Over residues 1251–1265 the composition is skewed to acidic residues; the sequence is DPLETSKEEEELNDS. Residues Lys1257 and Lys1281 each participate in a glycyl lysine isopeptide (Lys-Gly) (interchain with G-Cter in SUMO2) cross-link. The C2H2-type 7; atypical zinc finger occupies 1333 to 1355; that stretch reads IRCTKCGKGVDNMPELHKHILAC. The C2H2-type 8; atypical zinc finger occupies 1455 to 1478; sequence HICPYCNREFTYIGSLNKHAAFSC. Disordered regions lie at residues 1478–1576, 1589–1612, and 1625–1652; these read CPKK…LRNS, GKKP…RSLH, and KSTL…VTRS. Over residues 1486–1498 the composition is skewed to basic residues; the sequence is PKKKVSHSSKKGG. Residues 1499 to 1511 show a composition bias toward low complexity; it reads HSSPASSDKNSNS. 2 stretches are compositionally biased toward polar residues: residues 1525 to 1556 and 1599 to 1608; these read QSMQ…SKQN and HSAQLSSKTS. Residues 1635-1645 show a composition bias toward basic and acidic residues; that stretch reads DRFNIKSRERS.

This sequence belongs to the class V-like SAM-binding methyltransferase superfamily. Binds to the retinoblastoma protein (RB). Interacts with GATA3. Highly expressed in retinoblastoma cell lines and in brain tumors. Also expressed in a number of other cell lines and in brain, heart, skeletal muscle, liver and spleen. Isoform 1 is expressed in testis at much higher level than isoform 3.

The protein resides in the nucleus. It catalyses the reaction L-lysyl(9)-[histone H3] + 3 S-adenosyl-L-methionine = N(6),N(6),N(6)-trimethyl-L-lysyl(9)-[histone H3] + 3 S-adenosyl-L-homocysteine + 3 H(+). S-adenosyl-L-methionine-dependent histone methyltransferase that specifically methylates 'Lys-9' of histone H3. May function as a DNA-binding transcription factor. Binds to the macrophage-specific TPA-responsive element (MTE) of the HMOX1 (heme oxygenase 1) gene and may act as a transcriptional activator of this gene. This chain is PR domain zinc finger protein 2 (PRDM2), found in Homo sapiens (Human).